The sequence spans 528 residues: Peptide chain release factor 3 (528 aa).

The 271-residue stretch at 10-280 (AKRRTFGIIS…IDMAPAPGPR (271 aa)) folds into the tr-type G domain. GTP-binding positions include 19-26 (SHPDAGKT), 87-91 (DTPGH), and 141-144 (NKLD).

The protein belongs to the TRAFAC class translation factor GTPase superfamily. Classic translation factor GTPase family. PrfC subfamily.

Its subcellular location is the cytoplasm. Functionally, increases the formation of ribosomal termination complexes and stimulates activities of RF-1 and RF-2. It binds guanine nucleotides and has strong preference for UGA stop codons. It may interact directly with the ribosome. The stimulation of RF-1 and RF-2 is significantly reduced by GTP and GDP, but not by GMP. The chain is Peptide chain release factor 3 from Desulfotalea psychrophila (strain LSv54 / DSM 12343).